The sequence spans 635 residues: Threonine--tRNA ligase (635 aa).

The TGS domain occupies 1-61 (MIKITLKDGK…HKDSSLEILT (61 aa)). A catalytic region spans residues 242–532 (DHRKLGKELD…LIEQYAGAFP (291 aa)). Cysteine 333, histidine 384, and histidine 509 together coordinate Zn(2+).

It belongs to the class-II aminoacyl-tRNA synthetase family. In terms of assembly, homodimer. The cofactor is Zn(2+).

The protein resides in the cytoplasm. The enzyme catalyses tRNA(Thr) + L-threonine + ATP = L-threonyl-tRNA(Thr) + AMP + diphosphate + H(+). Catalyzes the attachment of threonine to tRNA(Thr) in a two-step reaction: L-threonine is first activated by ATP to form Thr-AMP and then transferred to the acceptor end of tRNA(Thr). Also edits incorrectly charged L-seryl-tRNA(Thr). The polypeptide is Threonine--tRNA ligase (Clostridium botulinum (strain Okra / Type B1)).